The sequence spans 549 residues: Glucose-6-phosphate isomerase (549 aa).

E355 (proton donor) is an active-site residue. Residues H386 and K514 contribute to the active site.

The protein belongs to the GPI family.

Its subcellular location is the cytoplasm. The enzyme catalyses alpha-D-glucose 6-phosphate = beta-D-fructose 6-phosphate. The protein operates within carbohydrate biosynthesis; gluconeogenesis. It participates in carbohydrate degradation; glycolysis; D-glyceraldehyde 3-phosphate and glycerone phosphate from D-glucose: step 2/4. Its function is as follows. Catalyzes the reversible isomerization of glucose-6-phosphate to fructose-6-phosphate. The protein is Glucose-6-phosphate isomerase of Desulfatibacillum aliphaticivorans.